The following is a 436-amino-acid chain: 3-ketoacyl-CoA thiolase (436 aa).

Cysteine 99 functions as the Acyl-thioester intermediate in the catalytic mechanism. Catalysis depends on proton acceptor residues histidine 392 and cysteine 422.

This sequence belongs to the thiolase-like superfamily. Thiolase family. In terms of assembly, heterotetramer of two alpha chains (FadJ) and two beta chains (FadI).

The protein resides in the cytoplasm. The catalysed reaction is an acyl-CoA + acetyl-CoA = a 3-oxoacyl-CoA + CoA. It participates in lipid metabolism; fatty acid beta-oxidation. Catalyzes the final step of fatty acid oxidation in which acetyl-CoA is released and the CoA ester of a fatty acid two carbons shorter is formed. In Shewanella baltica (strain OS155 / ATCC BAA-1091), this protein is 3-ketoacyl-CoA thiolase.